A 284-amino-acid chain; its full sequence is Large ribosomal subunit protein uL2 (284 aa).

Positions 232–284 are disordered; that stretch reads RGTAMNPVDHPHGGGEGRHNGYIPRTPWGKVTKGLKTRDKRKSNKWIVKDRRK. A compositionally biased stretch (basic and acidic residues) spans 240–250; the sequence is DHPHGGGEGRH. Residues 264 to 284 show a composition bias toward basic residues; that stretch reads KGLKTRDKRKSNKWIVKDRRK.

It belongs to the universal ribosomal protein uL2 family. In terms of assembly, part of the 50S ribosomal subunit. Forms a bridge to the 30S subunit in the 70S ribosome.

Its function is as follows. One of the primary rRNA binding proteins. Required for association of the 30S and 50S subunits to form the 70S ribosome, for tRNA binding and peptide bond formation. It has been suggested to have peptidyltransferase activity; this is somewhat controversial. Makes several contacts with the 16S rRNA in the 70S ribosome. This Chlamydia felis (strain Fe/C-56) (Chlamydophila felis) protein is Large ribosomal subunit protein uL2.